A 288-amino-acid chain; its full sequence is uncharacterized protein (288 aa).

This sequence to M.bovis Mb1522c, M.leprae ML1804 and M.avium MAV321.

This is an uncharacterized protein from Mycobacterium tuberculosis (strain ATCC 25618 / H37Rv).